Here is a 387-residue protein sequence, read N- to C-terminus: Sorting nexin-7 (387 aa).

In terms of domain architecture, PX spans 30 to 151 (KDLFITVDEP…IFLTAQAWEL (122 aa)). Residues Arg73, Gln75, Lys103, and Arg117 each coordinate a 1,2-diacyl-sn-glycero-3-phospho-(1D-myo-inositol-3-phosphate). The region spanning 178-387 (GVKNRPEEFM…HLEEASEDKP (210 aa)) is the BAR domain.

The protein belongs to the sorting nexin family. Heterodimer; heterodimerizes with SNX4.

Its subcellular location is the early endosome membrane. Functionally, involved in the regulation of endocytosis and in several stages of intracellular trafficking. Together with SNX4, involved in autophagosome assembly by regulating trafficking and recycling of phospholipid scramblase ATG9A. In Homo sapiens (Human), this protein is Sorting nexin-7.